The following is a 276-amino-acid chain: Dermonecrotic toxin LlSicTox-alphaIV1ii (276 aa).

His-5 is a catalytic residue. Mg(2+)-binding residues include Glu-25 and Asp-27. His-41 serves as the catalytic Nucleophile. Cystine bridges form between Cys-45/Cys-51 and Cys-47/Cys-193. Asp-85 provides a ligand contact to Mg(2+).

The protein belongs to the arthropod phospholipase D family. Class II subfamily. Requires Mg(2+) as cofactor. As to expression, expressed by the venom gland.

It localises to the secreted. The enzyme catalyses an N-(acyl)-sphingosylphosphocholine = an N-(acyl)-sphingosyl-1,3-cyclic phosphate + choline. It catalyses the reaction an N-(acyl)-sphingosylphosphoethanolamine = an N-(acyl)-sphingosyl-1,3-cyclic phosphate + ethanolamine. The catalysed reaction is a 1-acyl-sn-glycero-3-phosphocholine = a 1-acyl-sn-glycero-2,3-cyclic phosphate + choline. It carries out the reaction a 1-acyl-sn-glycero-3-phosphoethanolamine = a 1-acyl-sn-glycero-2,3-cyclic phosphate + ethanolamine. In terms of biological role, dermonecrotic toxins cleave the phosphodiester linkage between the phosphate and headgroup of certain phospholipids (sphingolipid and lysolipid substrates), forming an alcohol (often choline) and a cyclic phosphate. This toxin acts on sphingomyelin (SM). It may also act on ceramide phosphoethanolamine (CPE), lysophosphatidylcholine (LPC) and lysophosphatidylethanolamine (LPE), but not on lysophosphatidylserine (LPS), and lysophosphatidylglycerol (LPG). It acts by transphosphatidylation, releasing exclusively cyclic phosphate products as second products. Induces dermonecrosis, hemolysis, increased vascular permeability, edema, inflammatory response, and platelet aggregation. The polypeptide is Dermonecrotic toxin LlSicTox-alphaIV1ii (Loxosceles laeta (South American recluse spider)).